We begin with the raw amino-acid sequence, 48 residues long: ATP synthase protein 8 (48 aa).

A helical transmembrane segment spans residues 12–32 (LLTGGILAISLLLYFVATYLL).

Belongs to the ATPase protein 8 family. F-type ATPases have 2 components, CF(1) - the catalytic core - and CF(0) - the membrane proton channel.

The protein resides in the mitochondrion membrane. In terms of biological role, mitochondrial membrane ATP synthase (F(1)F(0) ATP synthase or Complex V) produces ATP from ADP in the presence of a proton gradient across the membrane which is generated by electron transport complexes of the respiratory chain. F-type ATPases consist of two structural domains, F(1) - containing the extramembraneous catalytic core and F(0) - containing the membrane proton channel, linked together by a central stalk and a peripheral stalk. During catalysis, ATP synthesis in the catalytic domain of F(1) is coupled via a rotary mechanism of the central stalk subunits to proton translocation. Part of the complex F(0) domain. Minor subunit located with subunit a in the membrane. In Candida parapsilosis (Yeast), this protein is ATP synthase protein 8 (ATP8).